A 505-amino-acid chain; its full sequence is Prenylcysteine oxidase 1 (505 aa).

Positions 1–27 (MGRVVAELVSSLLGLWLLLCSCGCPEG) are cleaved as a signal peptide. N-linked (GlcNAc...) asparagine glycans are attached at residues N196, N323, and N353.

It belongs to the prenylcysteine oxidase family. FAD is required as a cofactor. Widely expressed.

It is found in the lysosome. It carries out the reaction an S-polyprenyl-L-cysteine + O2 + H2O = a polyprenal + L-cysteine + H2O2. The enzyme catalyses S-(2E,6E)-farnesyl-L-cysteine + O2 + H2O = (2E,6E)-farnesal + L-cysteine + H2O2. The catalysed reaction is [(2E,6E,10E)-geranylgeranyl]-L-cysteine + O2 + H2O = (2E,6E,10E)-geranylgeranial + L-cysteine + H2O2. Prenylcysteine oxidase that cleaves the thioether bond of prenyl-L-cysteines, such as farnesylcysteine and geranylgeranylcysteine. Only active against free prenylcysteines and not prenylcysteine residues within prenylated proteins or peptides. Involved in the final step in the degradation of prenylated proteins, by degrading prenylcysteines after the protein has been degraded. In Homo sapiens (Human), this protein is Prenylcysteine oxidase 1.